Reading from the N-terminus, the 752-residue chain is MGPLMVLFCLLFLYPGLADSAPSCPQNVNISGGTFTLSHGWAPGSLLTYSCPQGLYPSPASRLCKSSGQWQTPGATRSLSKAVCKPVRCPAPVSFENGIYTPRLGSYPVGGNVSFECEDGFILRGSPVRQCRPNGMWDGETAVCDNGAGHCPNPGISLGAVRTGFRFGHGDKVRYRCSSNLVLTGSSERECQGNGVWSGTEPICRQPYSYDFPEDVAPALGTSFSHMLGATNPTQKTKESLGRKIQIQRSGHLNLYLLLDCSQSVSENDFLIFKESASLMVDRIFSFEINVSVAIITFASEPKVLMSVLNDNSRDMTEVISSLENANYKDHENGTGTNTYAALNSVYLMMNNQMRLLGMETMAWQEIRHAIILLTDGKSNMGGSPKTAVDHIREILNINQKRNDYLDIYAIGVGKLDVDWRELNELGSKKDGERHAFILQDTKALHQVFEHMLDVSKLTDTICGVGNMSANASDQERTPWHVTIKPKSQETCRGALISDQWVLTAAHCFRDGNDHSLWRVNVGDPKSQWGKEFLIEKAVISPGFDVFAKKNQGILEFYGDDIALLKLAQKVKMSTHARPICLPCTMEANLALRRPQGSTCRDHENELLNKQSVPAHFVALNGSKLNINLKMGVEWTSCAEVVSQEKTMFPNLTDVREVVTDQFLCSGTQEDESPCKGESGGAVFLERRFRFFQVGLVSWGLYNPCLGSADKNSRKRAPRSKVPPPRDFHINLFRMQPWLRQHLGDVLNFLPL.

An N-terminal signal peptide occupies residues 1 to 20; the sequence is MGPLMVLFCLLFLYPGLADS. Sushi domains are found at residues 22–86, 87–146, and 149–206; these read PSCP…VCKP, VRCP…VCDN, and GHCP…ICRQ. 6 cysteine pairs are disulfide-bonded: C24-C64, C51-C84, C89-C131, C117-C144, C151-C191, and C177-C204. The N-linked (GlcNAc...) asparagine glycan is linked to N29. An N-linked (GlcNAc...) asparagine glycan is attached at N112. Positions 254-452 constitute a VWFA domain; that stretch reads NLYLLLDCSQ…KALHQVFEHM (199 aa). The MIDAS-like motif signature appears at 260–264; sequence DCSQS. The Mg(2+) site is built by S262 and S264. Positions 262 and 264 each coordinate Mn(2+). Residues N290 and N333 are each glycosylated (N-linked (GlcNAc...) asparagine). T337 is a binding site for Mg(2+). T337 is a binding site for Mn(2+). 3 disulfide bridges follow: C463-C581, C492-C508, and C584-C600. The region spanning 464–744 is the Peptidase S1 domain; that stretch reads GVGNMSANAS…MQPWLRQHLG (281 aa). N-linked (GlcNAc...) asparagine glycans are attached at residues N467 and N471. Catalysis depends on charge relay system residues H507 and D561. N621 carries an N-linked (GlcNAc...) asparagine glycan. 2 disulfides stabilise this stretch: C638-C665 and C675-C705. An N-linked (GlcNAc...) (complex) asparagine glycan is attached at N651. S679 functions as the Charge relay system in the catalytic mechanism.

It belongs to the peptidase S1 family. Serine protease component of the C3 convertase, also named C4bC2b, composed of the serine protease complement C2b and complement C4b. Serine protease component of the C5 convertase, also named C4bC2bC3b, composed of the serine protease complement C2b, complement C3b, as well as complement C4b. In terms of assembly, (Microbial infection) Interacts with Schistosoma haematobium TOR (via N-terminal extracellular domain). This results in inhibition of the classical and lectin pathway of complement activation, probably due to interference with binding of C2a to C4b such that C3 convertase cannot be formed. This infers resistance to complement-mediated cell lysis, allowing parasite survival and infection. It depends on Mg(2+) as a cofactor. Requires Mn(2+) as cofactor. In terms of processing, cleaved and activated by different proteases depending on the complement pathway to generate complement C2a and serine protease complement C2b chains. Cleaved and activated by C1S following activation by the classical complement system. Cleaved and activated by MASP2 following activation by the lectin complement system. Cleaved and activated by GZMK following activation by the GZMK complement system.

Its subcellular location is the secreted. The protein resides in the cell surface. It catalyses the reaction Selective cleavage of Arg-|-Ser bond in complement component C3 alpha-chain to form C3a and C3b, and Arg-|-Xaa bond in complement component C5 alpha-chain to form C5a and C5b.. Functionally, precursor of the catalytic component of the C3 and C5 convertase complexes, which are part of the complement pathway, a cascade of proteins that leads to phagocytosis and breakdown of pathogens and signaling that strengthens the adaptive immune system. Component C2 is part of the classical, lectin and GZMK complement systems. Catalytic component of the complement C3 and C5 convertase complexes. Following complement activation, recruited to the surface of pathogens by complement C4b opsonin to form the C3 convertase, or C3b and C4b opsonins to form the C5 convertase. As part of the C3 convertase, cleaves and activate C3 into C3a anaphylatoxin and C3b opsonin, the next components of the complement pathways. As part of the C5 convertase, cleaves and activate C5 into C5a anaphylatoxin and C5b component of the membrane attack complex. The polypeptide is Complement C2 (Homo sapiens (Human)).